Here is a 462-residue protein sequence, read N- to C-terminus: A-type ATP synthase subunit B (462 aa).

It belongs to the ATPase alpha/beta chains family. Has multiple subunits with at least A(3), B(3), C, D, E, F, H, I and proteolipid K(x).

Its subcellular location is the cell membrane. Functionally, component of the A-type ATP synthase that produces ATP from ADP in the presence of a proton gradient across the membrane. The B chain is a regulatory subunit. The protein is A-type ATP synthase subunit B of Pyrococcus furiosus (strain ATCC 43587 / DSM 3638 / JCM 8422 / Vc1).